Consider the following 185-residue polypeptide: Inner membrane-spanning protein YciB (185 aa).

Transmembrane regions (helical) follow at residues 19 to 39 (IHGI…LMAW), 49 to 69 (TMTW…LYFH), 72 to 92 (TFIK…LLFT), 122 to 142 (GYWI…AYAF), and 150 to 170 (FKLF…AVVI).

The protein belongs to the YciB family.

The protein resides in the cell inner membrane. Its function is as follows. Plays a role in cell envelope biogenesis, maintenance of cell envelope integrity and membrane homeostasis. The protein is Inner membrane-spanning protein YciB of Acidithiobacillus ferrooxidans (strain ATCC 23270 / DSM 14882 / CIP 104768 / NCIMB 8455) (Ferrobacillus ferrooxidans (strain ATCC 23270)).